Reading from the N-terminus, the 566-residue chain is Proline--tRNA ligase (566 aa).

It belongs to the class-II aminoacyl-tRNA synthetase family. ProS type 1 subfamily. In terms of assembly, homodimer.

The protein localises to the cytoplasm. The catalysed reaction is tRNA(Pro) + L-proline + ATP = L-prolyl-tRNA(Pro) + AMP + diphosphate. Catalyzes the attachment of proline to tRNA(Pro) in a two-step reaction: proline is first activated by ATP to form Pro-AMP and then transferred to the acceptor end of tRNA(Pro). As ProRS can inadvertently accommodate and process non-cognate amino acids such as alanine and cysteine, to avoid such errors it has two additional distinct editing activities against alanine. One activity is designated as 'pretransfer' editing and involves the tRNA(Pro)-independent hydrolysis of activated Ala-AMP. The other activity is designated 'posttransfer' editing and involves deacylation of mischarged Ala-tRNA(Pro). The misacylated Cys-tRNA(Pro) is not edited by ProRS. The sequence is that of Proline--tRNA ligase from Exiguobacterium sibiricum (strain DSM 17290 / CCUG 55495 / CIP 109462 / JCM 13490 / 255-15).